A 73-amino-acid chain; its full sequence is MKATLLLLLLFAVILPGTISAEQEKPGSCPNVDMPIPPLGLCKTTCSKDSDCSETKKCCKNGCGFMTCTTARP.

Residues 1–21 form the signal peptide; it reads MKATLLLLLLFAVILPGTISA. The region spanning 22 to 72 is the WAP domain; it reads EQEKPGSCPNVDMPIPPLGLCKTTCSKDSDCSETKKCCKNGCGFMTCTTAR. Intrachain disulfides connect C29–C59, C42–C63, C46–C58, and C52–C68.

It belongs to the venom waprin family. Expressed by the venom gland.

It is found in the secreted. In terms of biological role, damages membranes of susceptible bacteria. Has no hemolytic activity. Not toxic to mice. Does not inhibit the proteinases elastase and cathepsin G. This chain is Waprin-Phi2, found in Philodryas olfersii (Green snake).